The primary structure comprises 1052 residues: Carbamoyl phosphate synthase large chain (1052 aa).

The interval 1–399 is carboxyphosphate synthetic domain; sequence MRENVKRVLV…ALQKAVRMLD (399 aa). 12 residues coordinate ATP: Arg-127, Arg-167, Gly-173, Gly-174, Lys-206, Leu-208, Glu-213, Gly-239, Val-240, His-241, Gln-282, and Glu-296. Residues 131–325 form the ATP-grasp 1 domain; it reads RETMINVNLP…LAYVSAKLAL (195 aa). Residues Gln-282, Glu-296, and Asn-298 each contribute to the Mg(2+) site. Residues Gln-282, Glu-296, and Asn-298 each contribute to the Mn(2+) site. Residues 400 to 548 form an oligomerization domain region; that stretch reads LGEPGIIGGK…VTYNGTEDDI (149 aa). Positions 549–930 are carbamoyl phosphate synthetic domain; it reads EFSNGIRKLL…LKSWLSSSPN (382 aa). The region spanning 674-864 is the ATP-grasp 2 domain; that stretch reads SRLLDKLGIK…IIDLALTGVI (191 aa). Arg-710, Lys-749, Ile-751, Glu-756, Gly-780, Val-781, His-782, Ser-783, Gln-823, and Glu-835 together coordinate ATP. Residues Gln-823, Glu-835, and Asn-837 each contribute to the Mg(2+) site. Mn(2+) is bound by residues Gln-823, Glu-835, and Asn-837. In terms of domain architecture, MGS-like spans 930–1052; that stretch reads NRLPDQKGIA…YEIGEYGAGI (123 aa). The tract at residues 931–1052 is allosteric domain; that stretch reads RLPDQKGIAL…YEIGEYGAGI (122 aa).

The protein belongs to the CarB family. Composed of two chains; the small (or glutamine) chain promotes the hydrolysis of glutamine to ammonia, which is used by the large (or ammonia) chain to synthesize carbamoyl phosphate. Tetramer of heterodimers (alpha,beta)4. Mg(2+) is required as a cofactor. Requires Mn(2+) as cofactor.

The enzyme catalyses hydrogencarbonate + L-glutamine + 2 ATP + H2O = carbamoyl phosphate + L-glutamate + 2 ADP + phosphate + 2 H(+). The catalysed reaction is hydrogencarbonate + NH4(+) + 2 ATP = carbamoyl phosphate + 2 ADP + phosphate + 2 H(+). It functions in the pathway amino-acid biosynthesis; L-arginine biosynthesis; carbamoyl phosphate from bicarbonate: step 1/1. The protein operates within pyrimidine metabolism; UMP biosynthesis via de novo pathway; (S)-dihydroorotate from bicarbonate: step 1/3. Its function is as follows. Large subunit of the glutamine-dependent carbamoyl phosphate synthetase (CPSase). CPSase catalyzes the formation of carbamoyl phosphate from the ammonia moiety of glutamine, carbonate, and phosphate donated by ATP, constituting the first step of 2 biosynthetic pathways, one leading to arginine and/or urea and the other to pyrimidine nucleotides. The large subunit (synthetase) binds the substrates ammonia (free or transferred from glutamine from the small subunit), hydrogencarbonate and ATP and carries out an ATP-coupled ligase reaction, activating hydrogencarbonate by forming carboxy phosphate which reacts with ammonia to form carbamoyl phosphate. In Sulfolobus acidocaldarius (strain ATCC 33909 / DSM 639 / JCM 8929 / NBRC 15157 / NCIMB 11770), this protein is Carbamoyl phosphate synthase large chain.